Here is a 360-residue protein sequence, read N- to C-terminus: Protein Wnt-2 (360 aa).

Positions 1-25 (MNACLVGIWLWLPLLFTWLSPEVSS) are cleaved as a signal peptide. Intrachain disulfides connect cysteine 76–cysteine 87, cysteine 127–cysteine 135, cysteine 137–cysteine 157, cysteine 206–cysteine 220, cysteine 208–cysteine 215, cysteine 278–cysteine 309, cysteine 294–cysteine 304, cysteine 308–cysteine 348, cysteine 324–cysteine 339, cysteine 326–cysteine 336, and cysteine 331–cysteine 332. Serine 212 carries the O-palmitoleoyl serine; by PORCN lipid modification. N-linked (GlcNAc...) asparagine glycosylation is present at asparagine 295.

This sequence belongs to the Wnt family. Post-translationally, palmitoleoylation is required for efficient binding to frizzled receptors. Depalmitoleoylation leads to Wnt signaling pathway inhibition.

Its subcellular location is the secreted. It localises to the extracellular space. It is found in the extracellular matrix. Functionally, ligand for members of the frizzled family of seven transmembrane receptors. Probable developmental protein. May be a signaling molecule which affects the development of discrete regions of tissues. Is likely to signal over only few cell diameters. The protein is Protein Wnt-2 (WNT2) of Muntiacus muntjak (Barking deer).